We begin with the raw amino-acid sequence, 489 residues long: FAD-linked oxidoreductase tazG (489 aa).

The first 17 residues, 1–17 (MVAFSAILQTALGLSAA), serve as a signal peptide directing secretion. Asparagine 38 carries an N-linked (GlcNAc...) asparagine glycan. An FAD-binding PCMH-type domain is found at 55–224 (APSYGAGAIK…TSATYRLPEV (170 aa)). N-linked (GlcNAc...) asparagine glycosylation is found at asparagine 242 and asparagine 306.

The protein belongs to the oxygen-dependent FAD-linked oxidoreductase family. It depends on FAD as a cofactor.

Its pathway is secondary metabolite biosynthesis. FAD-linked oxidoreductase; part of the gene cluster that mediates the biosynthesis of azaterrilone A and other azaphilones, a class of fungal metabolites characterized by a highly oxygenated pyrano-quinone bicyclic core and exhibiting a broad range of bioactivities. The first step of the pathway begins with the non-reducing polyketide synthase tazA that assembles one acetyl-CoA starter unit, five malonyl-CoA units, and catalyzes a series of Claisen condensations, methylation, PT-mediated cyclization, and finally releases the first hexaketide precursor through the R-domain. The tazA product then undergoes reduction on its terminal ketone and the following pyran-ring formation by yet undetermined enzyme(s). Dehydration and enoyl reduction, possibly involving the trans-enoyl reductase tazE leads to the next intermediate. TazD is predicted as an acetyltransferase and might catalyze the acetylation steps leading to the synthesis of azaterrilone A. Azaterrilone A is not the final product of the taz pathway and both the highly reducing polyketide synthase tazB and the dual enzyme tazHJ catalyze late steps of the pathway, leading to the production of the 2 final stereoisomers that contain additional polyketide modification whose structures have still to be determined. In Aspergillus terreus (strain NIH 2624 / FGSC A1156), this protein is FAD-linked oxidoreductase tazG.